Consider the following 345-residue polypeptide: Phenylalanine--tRNA ligase alpha subunit (345 aa).

Glu-253 lines the Mg(2+) pocket.

The protein belongs to the class-II aminoacyl-tRNA synthetase family. Phe-tRNA synthetase alpha subunit type 1 subfamily. As to quaternary structure, tetramer of two alpha and two beta subunits. Mg(2+) serves as cofactor.

Its subcellular location is the cytoplasm. The catalysed reaction is tRNA(Phe) + L-phenylalanine + ATP = L-phenylalanyl-tRNA(Phe) + AMP + diphosphate + H(+). This chain is Phenylalanine--tRNA ligase alpha subunit, found in Nitratidesulfovibrio vulgaris (strain DP4) (Desulfovibrio vulgaris).